Reading from the N-terminus, the 493-residue chain is Cobyric acid synthase (493 aa).

Residues 260–427 enclose the GATase cobBQ-type domain; sequence RLSVAAIRLP…RHGYLQDDPA (168 aa). His419 is an active-site residue.

Belongs to the CobB/CobQ family. CobQ subfamily.

Its pathway is cofactor biosynthesis; adenosylcobalamin biosynthesis. In terms of biological role, catalyzes amidations at positions B, D, E, and G on adenosylcobyrinic A,C-diamide. NH(2) groups are provided by glutamine, and one molecule of ATP is hydrogenolyzed for each amidation. This chain is Cobyric acid synthase, found in Corynebacterium efficiens (strain DSM 44549 / YS-314 / AJ 12310 / JCM 11189 / NBRC 100395).